Reading from the N-terminus, the 435-residue chain is Serine--tRNA ligase (435 aa).

Residue 240–242 (TAE) participates in L-serine binding. 271-273 (RSE) provides a ligand contact to ATP. Glu294 provides a ligand contact to L-serine. Residue 358-361 (EISS) coordinates ATP. Ser393 serves as a coordination point for L-serine.

This sequence belongs to the class-II aminoacyl-tRNA synthetase family. Type-1 seryl-tRNA synthetase subfamily. Homodimer. The tRNA molecule binds across the dimer.

Its subcellular location is the cytoplasm. The catalysed reaction is tRNA(Ser) + L-serine + ATP = L-seryl-tRNA(Ser) + AMP + diphosphate + H(+). It carries out the reaction tRNA(Sec) + L-serine + ATP = L-seryl-tRNA(Sec) + AMP + diphosphate + H(+). The protein operates within aminoacyl-tRNA biosynthesis; selenocysteinyl-tRNA(Sec) biosynthesis; L-seryl-tRNA(Sec) from L-serine and tRNA(Sec): step 1/1. Catalyzes the attachment of serine to tRNA(Ser). Is also able to aminoacylate tRNA(Sec) with serine, to form the misacylated tRNA L-seryl-tRNA(Sec), which will be further converted into selenocysteinyl-tRNA(Sec). This Cupriavidus metallidurans (strain ATCC 43123 / DSM 2839 / NBRC 102507 / CH34) (Ralstonia metallidurans) protein is Serine--tRNA ligase.